The chain runs to 43 residues: Protein PsbN (43 aa).

The chain crosses the membrane as a helical span at residues 5–27 (TLVAISISGLLVSFTGYALYTAF).

It belongs to the PsbN family.

Its subcellular location is the plastid. The protein localises to the chloroplast thylakoid membrane. May play a role in photosystem I and II biogenesis. This Coelogyne cristata (Orchid) protein is Protein PsbN.